The chain runs to 175 residues: uncharacterized protein (175 aa).

The first 22 residues, 1-22 (MNRIVGILISILMLACIGVTMA), serve as a signal peptide directing secretion.

This is an uncharacterized protein from Archaeoglobus fulgidus (strain ATCC 49558 / DSM 4304 / JCM 9628 / NBRC 100126 / VC-16).